The following is a 95-amino-acid chain: Small ubiquitin-related modifier 2 (95 aa).

Residue Lys11 forms a Glycyl lysine isopeptide (Lys-Gly) (interchain with G-Cter in SUMO) linkage. In terms of domain architecture, Ubiquitin-like spans 16-95 (DHINLKVAGQ…VFQQQTGGSF (80 aa)). Gly93 participates in a covalent cross-link: Glycyl lysine isopeptide (Gly-Lys) (interchain with K-? in acceptor proteins). The propeptide occupies 94 to 95 (SF).

The protein belongs to the ubiquitin family. SUMO subfamily. As to quaternary structure, interacts with sae2 and ube2i. Covalently attached to a number of proteins, including top2. Polymeric chains can be formed through Lys-11 cross-linking. Post-translationally, cleavage of precursor form by a sentrin-specific protease is necessary for function.

It localises to the nucleus. Functionally, ubiquitin-like protein that can be covalently attached to proteins as a monomer or as a lysine-linked polymer. Covalent attachment via an isopeptide bond to its substrates requires prior activation by the E1 complex sae1-sae2 and linkage to the E2 enzyme ube2i, and can be promoted by an E3 ligase such as pias1-4. This post-translational modification on lysine residues of proteins plays a crucial role in a number of cellular processes such as nuclear transport, DNA replication and repair, mitosis and signal transduction. Polymeric sumo2 chains are also susceptible to polyubiquitination which functions as a signal for proteasomal degradation of modified proteins. The sequence is that of Small ubiquitin-related modifier 2 (sumo2) from Xenopus tropicalis (Western clawed frog).